Here is a 460-residue protein sequence, read N- to C-terminus: Muscarinic acetylcholine receptor M1 (460 aa).

The Extracellular portion of the chain corresponds to 1–22; sequence MNTSAPPAVSPNITVLAPGKGP. 2 N-linked (GlcNAc...) asparagine glycosylation sites follow: Asn2 and Asn12. A helical transmembrane segment spans residues 23–48; that stretch reads WQVAFIGITTGLLSLATVTGNLLVLI. Residues 49-62 are Cytoplasmic-facing; the sequence is SFKVNTELKTVNNY. A helical transmembrane segment spans residues 63-84; that stretch reads FLLSLACADLIIGTFSMNLYTT. Topologically, residues 85–95 are extracellular; sequence YLLMGHWALGT. The chain crosses the membrane as a helical span at residues 96–121; the sequence is LACDLWLALDYVASNASVMNLLLISF. Cys98 and Cys178 are joined by a disulfide. Topologically, residues 122–142 are cytoplasmic; the sequence is DRYFSVTRPLSYRAKRTPRRA. The helical transmembrane segment at 143–164 threads the bilayer; that stretch reads ALMIGLAWLVSFVLWAPAILFW. Residues 165-185 are Extracellular-facing; sequence QYLVGERTVLAGQCYIQFLSQ. The chain crosses the membrane as a helical span at residues 186–209; the sequence is PIITFGTAMAAFYLPVTVMCTLYW. Over 210 to 366 the chain is Cytoplasmic; the sequence is RIYRETESRA…LVKEKKAART (157 aa). Disordered stretches follow at residues 225 to 256, 274 to 297, and 310 to 351; these read LQGSETPGKGGGSSSSSERSQPGAEGSPGTPP, WKEEEEEDEGSMESLTSSEGEEPG, and EAQA…QLAK. Thr230 is subject to Phosphothreonine. The span at 238 to 247 shows a compositional bias: low complexity; it reads SSSSERSQPG. The segment covering 328 to 343 has biased composition (basic residues); that stretch reads RPTKKGRDRAGKGQKP. A helical transmembrane segment spans residues 367-390; the sequence is LSAILLAFILTWTPYNIMVLVSTF. Residues 391–397 lie on the Extracellular side of the membrane; that stretch reads CKDCVPE. Residues 398–420 form a helical membrane-spanning segment; sequence TLWELGYWLCYVNSTINPMCYAL. Residues 421–460 lie on the Cytoplasmic side of the membrane; sequence CNKAFRDTFRLLLLCRWDKRRWRKIPKRPGSVHRTPSRQC. A Phosphothreonine modification is found at Thr428. Ser451 is modified (phosphoserine). Thr455 carries the post-translational modification Phosphothreonine. Residue Ser457 is modified to Phosphoserine.

It belongs to the G-protein coupled receptor 1 family. Muscarinic acetylcholine receptor subfamily. CHRM1 sub-subfamily. As to quaternary structure, interacts with GPRASP2. Interacts with TMEM147.

The protein resides in the cell membrane. It localises to the postsynaptic cell membrane. Functionally, the muscarinic acetylcholine receptor mediates various cellular responses, including inhibition of adenylate cyclase, breakdown of phosphoinositides and modulation of potassium channels through the action of G proteins. Primary transducing effect is Pi turnover. This is Muscarinic acetylcholine receptor M1 (CHRM1) from Pongo abelii (Sumatran orangutan).